A 128-amino-acid polypeptide reads, in one-letter code: Small nuclear ribonucleoprotein SmD3a (128 aa).

Positions 7–79 constitute a Sm domain; it reads IPVKLLHESS…VRFLVIPDML (73 aa). Residues 90–128 form a disordered region; sequence GKGKSASLGVGRGRGAAMRAKGTGRGTGGGRGAVPPVRR. Gly residues predominate over residues 112 to 121; it reads TGRGTGGGRG.

The protein belongs to the snRNP core protein family. As to expression, expressed in young seedlings, roots, leaves, flowers and immature siliques.

Its subcellular location is the cytoplasm. The protein localises to the cytosol. It localises to the nucleus. Functionally, core component of the spliceosomal U1, U2, U4 and U5 small nuclear ribonucleoproteins (snRNPs), the building blocks of the spliceosome. May play a minor role in the splicing of cellular pre-mRNAs. The polypeptide is Small nuclear ribonucleoprotein SmD3a (Arabidopsis thaliana (Mouse-ear cress)).